The sequence spans 695 residues: Probable glucan endo-1,3-beta-glucosidase btgC (695 aa).

4 disordered regions span residues 1-53 (MSGP…THHG), 117-140 (RRGT…GSDN), 175-258 (GPAG…RSQA), and 286-314 (ETSY…STGS). At 1 to 317 (MSGPHRTFSF…PKPSTGSRKR (317 aa)) the chain is on the cytoplasmic side. A compositionally biased stretch (polar residues) spans 36 to 45 (PISNMSSSPG). Residues 188–198 (HLGTSNSSQRN) show a composition bias toward polar residues. Acidic residues predominate over residues 231–241 (NPEEIADDGDD). Residues 318-338 (GWIIGAILAVIIIGAIVGGAV) traverse the membrane as a helical; Signal-anchor for type II membrane protein segment. The Extracellular portion of the chain corresponds to 339–695 (GGTIGHKDSG…IPDCGGKTAA (357 aa)). Positions 346–372 (DSGDSASGSSASTQSASGDTDTNGDLD) are disordered. Residues 349–366 (DSASGSSASTQSASGDTD) show a composition bias toward low complexity. Residues Asn-415, Asn-438, and Asn-466 are each glycosylated (N-linked (GlcNAc...) asparagine). Glu-498 functions as the Proton donor in the catalytic mechanism. Catalysis depends on Glu-597, which acts as the Nucleophile. An N-linked (GlcNAc...) asparagine glycan is attached at Asn-642.

It belongs to the glycosyl hydrolase 17 family.

The protein resides in the cell membrane. The enzyme catalyses Hydrolysis of (1-&gt;3)-beta-D-glucosidic linkages in (1-&gt;3)-beta-D-glucans.. Glucanases play a role in cell expansion during growth, in cell-cell fusion during mating, and in spore release during sporulation. This enzyme may be involved in beta-glucan degradation. Active on laminarin and lichenan. The chain is Probable glucan endo-1,3-beta-glucosidase btgC (btgC) from Aspergillus clavatus (strain ATCC 1007 / CBS 513.65 / DSM 816 / NCTC 3887 / NRRL 1 / QM 1276 / 107).